Consider the following 349-residue polypeptide: UPF0284 protein MM_0708 (349 aa).

It belongs to the UPF0284 family.

The chain is UPF0284 protein MM_0708 from Methanosarcina mazei (strain ATCC BAA-159 / DSM 3647 / Goe1 / Go1 / JCM 11833 / OCM 88) (Methanosarcina frisia).